Consider the following 106-residue polypeptide: UPF0145 protein APL_0465 (106 aa).

It belongs to the UPF0145 family.

The polypeptide is UPF0145 protein APL_0465 (Actinobacillus pleuropneumoniae serotype 5b (strain L20)).